A 104-amino-acid polypeptide reads, in one-letter code: Phosphoribosyl-ATP pyrophosphatase (104 aa).

The protein belongs to the PRA-PH family.

It localises to the cytoplasm. The enzyme catalyses 1-(5-phospho-beta-D-ribosyl)-ATP + H2O = 1-(5-phospho-beta-D-ribosyl)-5'-AMP + diphosphate + H(+). Its pathway is amino-acid biosynthesis; L-histidine biosynthesis; L-histidine from 5-phospho-alpha-D-ribose 1-diphosphate: step 2/9. This Methanoregula boonei (strain DSM 21154 / JCM 14090 / 6A8) protein is Phosphoribosyl-ATP pyrophosphatase.